Consider the following 196-residue polypeptide: Potassium-transporting ATPase KdpC subunit (196 aa).

The helical transmembrane segment at 7–27 threads the bilayer; it reads PALVLFFVLTLLTGVAYPLAV.

The protein belongs to the KdpC family. As to quaternary structure, the system is composed of three essential subunits: KdpA, KdpB and KdpC.

The protein localises to the cell inner membrane. Functionally, part of the high-affinity ATP-driven potassium transport (or Kdp) system, which catalyzes the hydrolysis of ATP coupled with the electrogenic transport of potassium into the cytoplasm. This subunit acts as a catalytic chaperone that increases the ATP-binding affinity of the ATP-hydrolyzing subunit KdpB by the formation of a transient KdpB/KdpC/ATP ternary complex. In Polaromonas naphthalenivorans (strain CJ2), this protein is Potassium-transporting ATPase KdpC subunit.